The following is a 215-amino-acid chain: MEKKMPKATAKRLPVYLRYLKMLGDSGVKRIKSREFSEMIQIPSATIRRDFSHVGELGRSGYGYDVPYLIEVFSNILNTQEEKRIALIGCGNLGKALLKNNFRRNENLNIVCAFDNDSALVGTTINGLLVHDMSELEAFVRQEGVTVAISTVPSHHAQKAIDKIVQAGVTAILNFAPDRVSVPANVSVQYIDLTTELQTLIYFNETFSLANSPKQ.

The H-T-H motif DNA-binding region spans 15 to 54 (VYLRYLKMLGDSGVKRIKSREFSEMIQIPSATIRRDFSHV). 89-94 (GCGNLG) is a binding site for NAD(+).

It belongs to the transcriptional regulatory Rex family. As to quaternary structure, homodimer.

It is found in the cytoplasm. In terms of biological role, modulates transcription in response to changes in cellular NADH/NAD(+) redox state. The chain is Redox-sensing transcriptional repressor Rex 2 from Enterococcus faecalis (strain ATCC 700802 / V583).